The primary structure comprises 83 residues: MSVRIRLKRMGAKKRPYYRIVVMDSSSPRDGRAIEELGYYHPVERQNQVKINKNKFQEWVDKGAIPSDTVKRILNKSNFKVDN.

Belongs to the bacterial ribosomal protein bS16 family.

This chain is Small ribosomal subunit protein bS16, found in Borrelia duttonii (strain Ly).